The following is a 776-amino-acid chain: Rho guanine nucleotide exchange factor 6 (776 aa).

The Calponin-homology (CH) domain occupies 1–111 (MNPEEQIVTW…TLLAVNKATE (111 aa)). The interval 115 to 151 (SERPCGRSSSLSAANTSQTNPQGAVSSTVSGLQRQSK) is disordered. The segment covering 121-151 (RSSSLSAANTSQTNPQGAVSSTVSGLQRQSK) has biased composition (polar residues). Position 126 is a phosphoserine (Ser126). The residue at position 133 (Thr133) is a Phosphothreonine. Ser144 and Ser150 each carry phosphoserine. The region spanning 160-219 (SHQLIVKARFNFKQTNEDELSVCKGDIIYVTRVEEGGWWEGTLNGRTGWFPSNYVREIKS) is the SH3 domain. Ser225 is modified (phosphoserine). Residues 241 to 421 (YYTVVLQNIL…KTLMGQCQDL (181 aa)) form the DH domain. The region spanning 443–548 (DIKNLGNVIF…WLEQLNRLIR (106 aa)) is the PH domain. A Phosphoserine modification is found at Ser488. Residues 561 to 572 (SSSCSAHSSFSS) are compositionally biased toward low complexity. The tract at residues 561 to 581 (SSSCSAHSSFSSTGQPRGPLE) is disordered. Phosphoserine occurs at positions 640 and 684.

Interacts with PAK kinases through the SH3 domain. Interacts with GIT1. Component of cytoplasmic complexes, which also contain PXN, GIT1 and PAK1. Interacts with PARVB. Interacts with BIN2. Identified in a complex with BIN2 and GIT2. Interacts with PARVG; the guanine nucleotide exchange factor activity of ARHGEF6 is essential for PARVG-induced enhancement of cell spreading. Ubiquitous.

It localises to the cell projection. It is found in the lamellipodium. In terms of biological role, acts as a RAC1 guanine nucleotide exchange factor (GEF). In Homo sapiens (Human), this protein is Rho guanine nucleotide exchange factor 6 (ARHGEF6).